The primary structure comprises 363 residues: 3-dehydroquinate synthase (363 aa).

NAD(+) is bound by residues 72-77, 106-110, 130-131, K142, and K151; these read SGEQSK, GVIGD, and TT. Residues E184, H246, and H263 each coordinate Zn(2+).

The protein belongs to the sugar phosphate cyclases superfamily. Dehydroquinate synthase family. Co(2+) serves as cofactor. Requires Zn(2+) as cofactor. It depends on NAD(+) as a cofactor.

It localises to the cytoplasm. The enzyme catalyses 7-phospho-2-dehydro-3-deoxy-D-arabino-heptonate = 3-dehydroquinate + phosphate. Its pathway is metabolic intermediate biosynthesis; chorismate biosynthesis; chorismate from D-erythrose 4-phosphate and phosphoenolpyruvate: step 2/7. Its function is as follows. Catalyzes the conversion of 3-deoxy-D-arabino-heptulosonate 7-phosphate (DAHP) to dehydroquinate (DHQ). This is 3-dehydroquinate synthase from Bacillus pumilus (strain SAFR-032).